Here is a 360-residue protein sequence, read N- to C-terminus: Peptide chain release factor 1 (360 aa).

Gln235 is modified (N5-methylglutamine).

Belongs to the prokaryotic/mitochondrial release factor family. Methylated by PrmC. Methylation increases the termination efficiency of RF1.

The protein localises to the cytoplasm. Peptide chain release factor 1 directs the termination of translation in response to the peptide chain termination codons UAG and UAA. The sequence is that of Peptide chain release factor 1 from Leptothrix cholodnii (strain ATCC 51168 / LMG 8142 / SP-6) (Leptothrix discophora (strain SP-6)).